The following is a 488-amino-acid chain: Metalloreductase STEAP3 (488 aa).

Topologically, residues 1–207 (MSGEMDKPLI…AREVEAIPLR (207 aa)) are cytoplasmic. Phosphoserine occurs at positions 11, 17, and 20. NADP(+) contacts are provided by residues 36-39 (SGDF), 58-59 (SR), 91-98 (VFREHYSS), asparagine 116, and alanine 151. Residues tryptophan 152 and aspartate 160 each contribute to the FAD site. A helical membrane pass occupies residues 208–228 (LLPSWKVPTLLALGLFVCFYA). Tyrosine 229 lines the Fe(3+) pocket. Residues 229–258 (YNFIRDVLQPYIRKDENKFYKMPLSVVNTT) are Vesicular-facing. N-linked (GlcNAc...) asparagine glycosylation is present at asparagine 256. Residues 259 to 279 (LPCVAYVLLSLVYLPGVLAAA) form a helical membrane-spanning segment. The region spanning 259–407 (LPCVAYVLLS…LGFVALMLST (149 aa)) is the Ferric oxidoreductase domain. The Cytoplasmic segment spans residues 280-304 (LQLRRGTKYQRFPDWLDHWLQHRKQ). FAD contacts are provided by glutamine 281, arginine 302, and lysine 303. The chain crosses the membrane as a helical span at residues 305–325 (IGLLSFFFAMLHALYSFCLPL). Histidine 316 serves as a coordination point for heme b. Tyrosine 319 provides a ligand contact to Fe(3+). The Vesicular segment spans residues 326–358 (RRSHRYDLVNLAVKQVLANKSRLWVEEEVWRME). Residues 359–379 (IYLSLGVLALGMLSLLAVTSI) traverse the membrane as a helical segment. Residue serine 378 coordinates FAD. At 380 to 390 (PSIANSLNWKE) the chain is on the cytoplasmic side. The helical transmembrane segment at 391 to 411 (FSFVQSTLGFVALMLSTMHTL) threads the bilayer. Glutamine 395 lines the FAD pocket. Residue histidine 409 coordinates heme b. Over 412 to 433 (TYGWTRAFEENHYKFYLPPTFT) the chain is Vesicular. A helical membrane pass occupies residues 434-454 (LTLLLPCVIILAKGLFLLPCL). The Cytoplasmic segment spans residues 455–488 (SHRLTKIRRGWERDGAVKFMLPAGHTQGEKTSHV). Serine 486 is subject to Phosphoserine.

The protein belongs to the STEAP family. Homodimer. Interacts with BNIP3L, MYT1, RHBDL4/RHBDD1 and TCTP. FAD is required as a cofactor. Heme b serves as cofactor. Proteolytically cleaved by RHBDL4/RHBDD1. RHBDL4/RHBDD1-induced cleavage occurs at multiple sites in a glycosylation-independent manner. Post-translationally, glycosylated.

The protein resides in the endosome membrane. It carries out the reaction 2 Fe(2+) + NADP(+) + H(+) = 2 Fe(3+) + NADPH. The enzyme catalyses 2 Cu(+) + NADP(+) + H(+) = 2 Cu(2+) + NADPH. Its function is as follows. Integral membrane protein that functions as a NADPH-dependent ferric-chelate reductase, using NADPH from one side of the membrane to reduce a Fe(3+) chelate that is bound on the other side of the membrane. Mediates sequential transmembrane electron transfer from NADPH to FAD and onto heme, and finally to the Fe(3+) chelate. Can also reduce Cu(2+) to Cu(1+). Mediates efficient transferrin-dependent iron uptake in erythroid cells. May play a role downstream of p53/TP53 to interface apoptosis and cell cycle progression. Indirectly involved in exosome secretion by facilitating the secretion of proteins such as TCTP. This is Metalloreductase STEAP3 (Steap3) from Rattus norvegicus (Rat).